Here is a 147-residue protein sequence, read N- to C-terminus: Peroxynitrite isomerase (147 aa).

His-137 lines the heme b pocket.

This sequence belongs to the nitrobindin family. Homodimer. It depends on heme b as a cofactor.

It carries out the reaction peroxynitrite = nitrate. The protein operates within nitrogen metabolism. Heme-binding protein able to scavenge peroxynitrite and to protect free L-tyrosine against peroxynitrite-mediated nitration, by acting as a peroxynitrite isomerase that converts peroxynitrite to nitrate. Therefore, this protein likely plays a role in peroxynitrite sensing and in the detoxification of reactive nitrogen and oxygen species (RNS and ROS, respectively). Is able to bind nitric oxide (NO) in vitro, but may act as a sensor of peroxynitrite levels in vivo. The polypeptide is Peroxynitrite isomerase (Frankia alni (strain DSM 45986 / CECT 9034 / ACN14a)).